Consider the following 295-residue polypeptide: ATP synthase gamma chain (295 aa).

This sequence belongs to the ATPase gamma chain family. F-type ATPases have 2 components, CF(1) - the catalytic core - and CF(0) - the membrane proton channel. CF(1) has five subunits: alpha(3), beta(3), gamma(1), delta(1), epsilon(1). CF(0) has three main subunits: a, b and c.

The protein localises to the cell inner membrane. Functionally, produces ATP from ADP in the presence of a proton gradient across the membrane. The gamma chain is believed to be important in regulating ATPase activity and the flow of protons through the CF(0) complex. The chain is ATP synthase gamma chain from Aliarcobacter butzleri (strain RM4018) (Arcobacter butzleri).